Consider the following 1409-residue polypeptide: L-2-aminoadipate reductase large subunit (1409 aa).

The region spanning 858-937 is the Carrier domain; sequence QALSETEQTL…GFASEIDRLL (80 aa). At S896 the chain carries O-(pantetheine 4'-phosphoryl)serine.

The protein belongs to the ATP-dependent AMP-binding enzyme family. In terms of assembly, heterodimer of an alpha and a beta subunit. Pantetheine 4'-phosphate serves as cofactor.

The catalysed reaction is (S)-2-amino-6-oxohexanoate + NADP(+) + H2O = L-2-aminoadipate + NADPH + 2 H(+). The enzyme catalyses (S)-2-amino-6-oxohexanoate + NAD(+) + H2O = L-2-aminoadipate + NADH + 2 H(+). It catalyses the reaction (S)-2-amino-6-oxohexanoate + AMP + diphosphate + NADP(+) = L-2-aminoadipate + ATP + NADPH + H(+). It participates in amino-acid biosynthesis; L-lysine biosynthesis via AAA pathway; L-lysine from L-alpha-aminoadipate (fungal route): step 1/3. Its function is as follows. Catalyzes the activation of alpha-aminoadipate by ATP-dependent adenylation and the reduction of activated alpha-aminoadipate by NADPH. The activated alpha-aminoadipate is bound to the phosphopantheinyl group of the enzyme itself before it is reduced to (S)-2-amino-6-oxohexanoate. The chain is L-2-aminoadipate reductase large subunit (lys2) from Penicillium chrysogenum (Penicillium notatum).